Here is a 366-residue protein sequence, read N- to C-terminus: Peptide chain release factor 1 (366 aa).

The residue at position 239 (Gln-239) is an N5-methylglutamine.

It belongs to the prokaryotic/mitochondrial release factor family. Post-translationally, methylated by PrmC. Methylation increases the termination efficiency of RF1.

The protein resides in the cytoplasm. Peptide chain release factor 1 directs the termination of translation in response to the peptide chain termination codons UAG and UAA. This chain is Peptide chain release factor 1, found in Albidiferax ferrireducens (strain ATCC BAA-621 / DSM 15236 / T118) (Rhodoferax ferrireducens).